We begin with the raw amino-acid sequence, 311 residues long: Tyrosine recombinase XerC (311 aa).

In terms of domain architecture, Core-binding (CB) spans 14–100 (ESLNETAKKF…SLRTFYKVLL (87 aa)). One can recognise a Tyr recombinase domain in the interval 121 to 303 (EVPKNFRINE…SKEKIKEVYR (183 aa)). Active-site residues include Arg163, Lys187, His255, Arg258, and His281. Catalysis depends on Tyr290, which acts as the O-(3'-phospho-DNA)-tyrosine intermediate.

The protein belongs to the 'phage' integrase family. XerC subfamily. As to quaternary structure, forms a cyclic heterotetrameric complex composed of two molecules of XerC and two molecules of XerD.

Its subcellular location is the cytoplasm. In terms of biological role, site-specific tyrosine recombinase, which acts by catalyzing the cutting and rejoining of the recombining DNA molecules. The XerC-XerD complex is essential to convert dimers of the bacterial chromosome into monomers to permit their segregation at cell division. It also contributes to the segregational stability of plasmids. This is Tyrosine recombinase XerC from Leptospira interrogans serogroup Icterohaemorrhagiae serovar copenhageni (strain Fiocruz L1-130).